The primary structure comprises 211 residues: tRNA (guanine-N(7)-)-methyltransferase (211 aa).

4 residues coordinate S-adenosyl-L-methionine: E43, D68, N95, and N117. K121 is a substrate binding site. Positions 123–128 are interaction with RNA; the sequence is RHNKRR. Substrate contacts are provided by residues D153 and 190–193; that span reads TEYE.

Belongs to the class I-like SAM-binding methyltransferase superfamily. TrmB family.

The catalysed reaction is guanosine(46) in tRNA + S-adenosyl-L-methionine = N(7)-methylguanosine(46) in tRNA + S-adenosyl-L-homocysteine. Its pathway is tRNA modification; N(7)-methylguanine-tRNA biosynthesis. Functionally, catalyzes the formation of N(7)-methylguanine at position 46 (m7G46) in tRNA. The polypeptide is tRNA (guanine-N(7)-)-methyltransferase (Clostridium tetani (strain Massachusetts / E88)).